The following is a 73-amino-acid chain: Cell division protein ZapB (73 aa).

A coiled-coil region spans residues 3-66 (LELLSQLETK…SWSDKVNGLV (64 aa)).

It belongs to the ZapB family. As to quaternary structure, homodimer. The ends of the coiled-coil dimer bind to each other, forming polymers. Interacts with FtsZ.

The protein resides in the cytoplasm. Functionally, non-essential, abundant cell division factor that is required for proper Z-ring formation. It is recruited early to the divisome by direct interaction with FtsZ, stimulating Z-ring assembly and thereby promoting cell division earlier in the cell cycle. Its recruitment to the Z-ring requires functional FtsA or ZipA. This Shewanella frigidimarina (strain NCIMB 400) protein is Cell division protein ZapB.